A 78-amino-acid polypeptide reads, in one-letter code: Acyl carrier protein (78 aa).

The Carrier domain occupies 2 to 77 (DNIVERVKKI…QAVDYILAGK (76 aa)). O-(pantetheine 4'-phosphoryl)serine is present on Ser-37.

This sequence belongs to the acyl carrier protein (ACP) family. Post-translationally, 4'-phosphopantetheine is transferred from CoA to a specific serine of apo-ACP by AcpS. This modification is essential for activity because fatty acids are bound in thioester linkage to the sulfhydryl of the prosthetic group.

It is found in the cytoplasm. The protein operates within lipid metabolism; fatty acid biosynthesis. Its function is as follows. Carrier of the growing fatty acid chain in fatty acid biosynthesis. This is Acyl carrier protein from Dechloromonas aromatica (strain RCB).